Here is a 201-residue protein sequence, read N- to C-terminus: uncharacterized protein (201 aa).

Interacts with the chaperones HSP82 and HSC82.

This is an uncharacterized protein from Saccharomyces cerevisiae (strain ATCC 204508 / S288c) (Baker's yeast).